The following is a 104-amino-acid chain: Nucleoid-associated protein LSL_1227 (104 aa).

Residues 1 to 19 (MMMRGMNMQSMMKQMQKLQ) show a composition bias toward low complexity. Positions 1 to 24 (MMMRGMNMQSMMKQMQKLQKNMKK) are disordered.

Belongs to the YbaB/EbfC family. Homodimer.

It is found in the cytoplasm. The protein localises to the nucleoid. In terms of biological role, binds to DNA and alters its conformation. May be involved in regulation of gene expression, nucleoid organization and DNA protection. The protein is Nucleoid-associated protein LSL_1227 of Ligilactobacillus salivarius (strain UCC118) (Lactobacillus salivarius).